Reading from the N-terminus, the 270-residue chain is Chlorophyll a-b binding protein 7, chloroplastic (270 aa).

The N-terminal 42 residues, 1-42 (MASACASSTIAAVAFSSPSSRRNGSIVGTTKASFLGGRRLRV), are a transit peptide targeting the chloroplast. Trp68 is a chlorophyll b binding site. Chlorophyll a is bound by residues Phe88, Glu107, and His110. Arg112 serves as a coordination point for chlorophyll b. Residues 113–133 (WAMLGAAGIFIPELLTKIGIL) traverse the membrane as a helical segment. Gln144 contacts chlorophyll a. The helical transmembrane segment at 146–166 (YFTDTTTLFIVELVLIGWAEG) threads the bilayer. Ile155, Glu165, and Arg168 together coordinate chlorophyll b. 6 residues coordinate chlorophyll a: Lys221, Glu222, Asn225, Arg227, Gln239, and His254. The helical transmembrane segment at 228-248 (LAMLAVMGAWFQHIYTGTGPI) threads the bilayer.

The protein belongs to the light-harvesting chlorophyll a/b-binding (LHC) protein family. As to quaternary structure, the LHC complex consists of chlorophyll a-b binding proteins. It depends on Binds at least 14 chlorophylls (8 Chl-a and 6 Chl-b) and carotenoids such as lutein and neoxanthin. as a cofactor. In terms of processing, photoregulated by reversible phosphorylation of its threonine residues.

The protein resides in the plastid. Its subcellular location is the chloroplast thylakoid membrane. In terms of biological role, the light-harvesting complex (LHC) functions as a light receptor, it captures and delivers excitation energy to photosystems with which it is closely associated. The polypeptide is Chlorophyll a-b binding protein 7, chloroplastic (CAB7) (Solanum lycopersicum (Tomato)).